We begin with the raw amino-acid sequence, 158 residues long: Protein BTG2 (158 aa).

Ser147 carries the post-translational modification Phosphoserine; by MAPK1 and MAPK3. At Ser149 the chain carries Phosphoserine; by MAPK14.

The protein belongs to the BTG family. In terms of assembly, interacts with PRKCABP. Interacts with CNOT7 and CNOT8; indicative for an association with the CCR4-NOT complex. Interacts with PIN1, inducing mitochondrial depolarization. Post-translationally, phosphorylated at Ser-147 by MAPK1/ERK2 and MAPK3/ERK1, and at Ser-149 by MAPK14, leading to PIN1-binding and mitochondrial depolarization.

Its function is as follows. Anti-proliferative protein; the function is mediated by association with deadenylase subunits of the CCR4-NOT complex. Activates mRNA deadenylation in a CNOT6 and CNOT7-dependent manner. In vitro can inhibit deadenylase activity of CNOT7 and CNOT8. Involved in cell cycle regulation. Could be involved in the growth arrest and differentiation of the neuronal precursors. Modulates transcription regulation mediated by ESR1. Involved in mitochondrial depolarization and neurite outgrowth. The protein is Protein BTG2 (BTG2) of Homo sapiens (Human).